The primary structure comprises 213 residues: Thymidylate kinase (213 aa).

10 to 17 (GLEGAGKT) lines the ATP pocket.

The protein belongs to the thymidylate kinase family.

It catalyses the reaction dTMP + ATP = dTDP + ADP. Phosphorylation of dTMP to form dTDP in both de novo and salvage pathways of dTTP synthesis. This chain is Thymidylate kinase, found in Salmonella dublin (strain CT_02021853).